Consider the following 57-residue polypeptide: MPIKKKVMMCLAVTLVFGSMSFPTLTNSGGFKESTDRNTTYIDHSPYKLSDQKKALS.

2 propeptides span residues methionine 1–serine 34 and tyrosine 41–serine 57. The interval threonine 26–serine 57 is disordered.

Belongs to the Phr family. Contains a predicted signal peptide cleavage site in the N-terminal region, however the propeptide is probably only subject to processing events at the ends of the mature peptide.

Its subcellular location is the secreted. The protein resides in the cytoplasm. Functionally, signaling molecule involved the regulation of both sporulation and competence. Secreted during production, but the mature peptide acts intracellularly, indicating that it needs to be imported into the cell to function. Acts by inhibiting RapH activity. Can inhibit both RapH activities, the dephosphorylation of Spo0F and the sequestration of ComA. The protein is Phosphatase RapH inhibitor (phrH) of Bacillus subtilis (strain 168).